The following is a 198-amino-acid chain: MNYPEPIAKLIESYMKLPGIGQKTATRLAFYTIDMKEEDANAFAKALISVKRDLHFCSICGNITEEDPCEICQDKNRDRSIILVVEEPKDVMSMEKMREYQGLYHVLHGVLSPMEGTGPEDINIASLIKRLHDDEVKEVIIATNATTEGEATAMYLSRLIKPAGITVTRLAHGLSVGSDIEYADEITLLKAVEGRREI.

The segment at 57-72 adopts a C4-type zinc-finger fold; the sequence is CSICGNITEEDPCEIC. The 96-residue stretch at 80 to 175 folds into the Toprim domain; the sequence is SIILVVEEPK…TVTRLAHGLS (96 aa).

It belongs to the RecR family.

Functionally, may play a role in DNA repair. It seems to be involved in an RecBC-independent recombinational process of DNA repair. It may act with RecF and RecO. The chain is Recombination protein RecR from Enterococcus faecalis (strain ATCC 700802 / V583).